A 119-amino-acid polypeptide reads, in one-letter code: ATP-dependent Clp protease adapter protein ClpS (119 aa).

The segment at 1–33 (MATRIPKTPSTPPAQKPAGDDGDSVVLERRPQK) is disordered.

This sequence belongs to the ClpS family. As to quaternary structure, binds to the N-terminal domain of the chaperone ClpA.

Its function is as follows. Involved in the modulation of the specificity of the ClpAP-mediated ATP-dependent protein degradation. This chain is ATP-dependent Clp protease adapter protein ClpS, found in Variovorax paradoxus (strain S110).